Consider the following 258-residue polypeptide: Axonemal dynein light intermediate polypeptide 1 (258 aa).

Disordered regions lie at residues 19 to 60 (RNTE…CVPD) and 207 to 231 (VNEQ…EEKK). A compositionally biased stretch (low complexity) spans 34–48 (SPQQPGPSGSAPQLP). The stretch at 176–255 (MRKALQAEQG…LKAQLEGIIA (80 aa)) forms a coiled coil.

The protein belongs to the inner dynein arm light chain family. Interacts with CFAP45. Interacts with DYNC1H1.

The protein resides in the cell projection. It is found in the cilium. It localises to the flagellum. Its subcellular location is the dynein axonemal particle. The protein localises to the cytoplasm. Involved in sperm flagellum assembly. The polypeptide is Axonemal dynein light intermediate polypeptide 1 (DNALI1) (Macaca fascicularis (Crab-eating macaque)).